The primary structure comprises 80 residues: Cell division activator CedA (80 aa).

The protein belongs to the CedA family.

Its function is as follows. Activates the cell division inhibited by chromosomal DNA over-replication. In Citrobacter koseri (strain ATCC BAA-895 / CDC 4225-83 / SGSC4696), this protein is Cell division activator CedA.